Consider the following 1058-residue polypeptide: Structural maintenance of chromosomes protein 6A (1058 aa).

One can recognise a Zinc-hook domain in the interval 23 to 1049 (ILRIRLENFM…SMVKSHEKIK (1027 aa)). 50-57 (GQNGSGKS) is a binding site for ATP. Positions 136 to 449 (KISSRKEELR…NDLKKHQTNK (314 aa)) form a coiled coil. The tract at residues 450 to 633 (VTAFGGDKVI…PPRPRRPTRL (184 aa)) is flexible hinge. Residues 634–927 (CASFDDQIKD…RNKDLLKREL (294 aa)) adopt a coiled-coil conformation.

The protein belongs to the SMC family. SMC6 subfamily. Forms a heterodimer with SMC5. The SMC5-SMC6 complex is composed of the SMC5 and SMC6 heterodimer attached via their hinge domain and from the non-SMC subunit NSE4A or NSE4B. Expressed in seedlings, rosette leaves and floral buds.

The protein resides in the nucleus. It is found in the chromosome. Its function is as follows. Core component of the SMC5-SMC6 complex that promotes sister chromatid alignment after DNA damage and facilitates double-stranded DNA breaks (DSBs) repair via homologous recombination between sister chromatids. This chain is Structural maintenance of chromosomes protein 6A (SMC6A), found in Arabidopsis thaliana (Mouse-ear cress).